The chain runs to 302 residues: uncharacterized protein (302 aa).

The tract at residues 1–24 (MTEISELASSSQKPEKTKYNLPKP) is disordered.

This is an uncharacterized protein from Schizosaccharomyces pombe (strain 972 / ATCC 24843) (Fission yeast).